The sequence spans 561 residues: Glutamate--tRNA ligase (561 aa).

A 'HIGH' region motif is present at residues 107–117; it reads PNPSGPLHLGH.

Belongs to the class-I aminoacyl-tRNA synthetase family. Glutamate--tRNA ligase type 2 subfamily.

It localises to the cytoplasm. It catalyses the reaction tRNA(Glu) + L-glutamate + ATP = L-glutamyl-tRNA(Glu) + AMP + diphosphate. In terms of biological role, catalyzes the attachment of glutamate to tRNA(Glu) in a two-step reaction: glutamate is first activated by ATP to form Glu-AMP and then transferred to the acceptor end of tRNA(Glu). In Methanospirillum hungatei JF-1 (strain ATCC 27890 / DSM 864 / NBRC 100397 / JF-1), this protein is Glutamate--tRNA ligase.